The chain runs to 1115 residues: Disheveled-associated activator of morphogenesis 2 (1115 aa).

The region spanning 40–416 (GPIPNPEELN…QIVLQDERGV (377 aa)) is the GBD/FH3 domain. The stretch at 434 to 515 (MLINENEVKQ…ELVARHNESS (82 aa)) forms a coiled coil. 2 disordered regions span residues 510-605 (RHNE…SHPL) and 655-697 (QEGP…SATG). Positions 518 to 694 (PVSSPPPPGG…TEKASRSMVS (177 aa)) constitute an FH1 domain. Residues 540 to 583 (LPPPPPPLPFDSCPPPPAPPLPPGGPPIPPGAPPCFSSGPPPSH) show a composition bias toward pro residues. In terms of domain architecture, FH2 spans 595 to 1042 (KKRIPQPSHP…DERRARMEFM (448 aa)). In terms of domain architecture, DAD spans 1065–1095 (EESGEFDDLVSALRSGEVFDKDLSKFKRNRK).

Belongs to the formin homology family. Interacts with DVL3. Interacts with INF2. In terms of tissue distribution, in early embryogenesis, expression is confined to embryonic ectoderm. Highly dynamic expression in later stages of gastrulation. In early somite stages, detected in posterior node and persists until 9-10 somites have developed when expression is concentrated in the chordoneural hinge. During organogenesis, expressed in the CNS, PNS, liver primordia, limb buds and genital tubercle.

In terms of biological role, key regulator of the Wnt signaling pathway, which is required for various processes during development, such as dorsal patterning, determination of left/right symmetry or myelination in the central nervous system. Acts downstream of Wnt ligands and upstream of beta-catenin (CTNNB1). Required for canonical Wnt signaling pathway during patterning in the dorsal spinal cord by promoting the aggregation of Disheveled (Dvl) complexes, thereby clustering and formation of Wnt receptor signalosomes and potentiating Wnt activity. During dorsal patterning of the spinal cord, inhibits oligodendrocytes differentiation via interaction with PIP5K1A. Also regulates non-canonical Wnt signaling pathway. Acts downstream of PITX2 in the developing gut and is required for left/right asymmetry within dorsal mesentery: affects mesenchymal condensation by lengthening cadherin-based junctions through WNT5A and non-canonical Wnt signaling, inducing polarized condensation in the left dorsal mesentery necessary to initiate gut rotation. Together with DAAM1, required for myocardial maturation and sarcomere assembly. Is a regulator of actin nucleation and elongation, filopodia formation and podocyte migration. This chain is Disheveled-associated activator of morphogenesis 2, found in Mus musculus (Mouse).